A 353-amino-acid chain; its full sequence is Nicotinate-nucleotide--dimethylbenzimidazole phosphoribosyltransferase (353 aa).

Glu-319 functions as the Proton acceptor in the catalytic mechanism.

Belongs to the CobT family.

It carries out the reaction 5,6-dimethylbenzimidazole + nicotinate beta-D-ribonucleotide = alpha-ribazole 5'-phosphate + nicotinate + H(+). The protein operates within nucleoside biosynthesis; alpha-ribazole biosynthesis; alpha-ribazole from 5,6-dimethylbenzimidazole: step 1/2. Catalyzes the synthesis of alpha-ribazole-5'-phosphate from nicotinate mononucleotide (NAMN) and 5,6-dimethylbenzimidazole (DMB). The sequence is that of Nicotinate-nucleotide--dimethylbenzimidazole phosphoribosyltransferase from Syntrophobacter fumaroxidans (strain DSM 10017 / MPOB).